A 515-amino-acid polypeptide reads, in one-letter code: NADH-ubiquinone oxidoreductase chain 2 (515 aa).

5 helical membrane-spanning segments follow: residues 63 to 83 (WPIGIAAFGLCLLFLIKNSGS), 250 to 270 (VFIYGSYGATLQQIFFFCSIA), 299 to 319 (FVLVLMWNREGIQSLLIGLFI), 356 to 376 (AITFSITMFSYAGIPPLAGFC), and 379 to 399 (FYLFFAALGCGAYFLAPVGVV).

It belongs to the complex I subunit 2 family.

The protein localises to the mitochondrion inner membrane. It carries out the reaction a ubiquinone + NADH + 5 H(+)(in) = a ubiquinol + NAD(+) + 4 H(+)(out). In terms of biological role, core subunit of the mitochondrial membrane respiratory chain NADH dehydrogenase (Complex I) that is believed to belong to the minimal assembly required for catalysis. Complex I functions in the transfer of electrons from NADH to the respiratory chain. The immediate electron acceptor for the enzyme is believed to be ubiquinone. The sequence is that of NADH-ubiquinone oxidoreductase chain 2 (ND2) from Beta vulgaris (Sugar beet).